We begin with the raw amino-acid sequence, 468 residues long: tRNA (guanine(37)-N(1))-methyltransferase 1 (468 aa).

S-adenosyl-L-methionine-binding positions include His207, 245-246, and 273-274; these read DL and DA. The interval 301–348 is disordered; it reads KEAAVSRGGETNSSGEEIRESNASINEPLGANKKPSGTTKTENGVGKD. Positions 309–325 are enriched in polar residues; that stretch reads GETNSSGEEIRESNASI. Asn380 serves as a coordination point for S-adenosyl-L-methionine.

It belongs to the class I-like SAM-binding methyltransferase superfamily. TRM5/TYW2 family. As to quaternary structure, monomer.

Its subcellular location is the mitochondrion matrix. The protein localises to the nucleus. It is found in the cytoplasm. The catalysed reaction is guanosine(37) in tRNA + S-adenosyl-L-methionine = N(1)-methylguanosine(37) in tRNA + S-adenosyl-L-homocysteine + H(+). Specifically methylates the N1 position of guanosine-37 in various cytoplasmic and mitochondrial tRNAs. Methylation is not dependent on the nature of the nucleoside 5' of the target nucleoside. This is the first step in the biosynthesis of wybutosine (yW), a modified base adjacent to the anticodon of tRNAs and required for accurate decoding. The polypeptide is tRNA (guanine(37)-N(1))-methyltransferase 1 (Arabidopsis thaliana (Mouse-ear cress)).